Here is a 306-residue protein sequence, read N- to C-terminus: Recombination-associated protein RdgC (306 aa).

The protein belongs to the RdgC family.

Its subcellular location is the cytoplasm. It localises to the nucleoid. In terms of biological role, may be involved in recombination. The protein is Recombination-associated protein RdgC of Pseudomonas aeruginosa (strain LESB58).